A 91-amino-acid polypeptide reads, in one-letter code: Peptide Ctry2146 (91 aa).

The first 23 residues, 1–23 (MKTQTLLVTFLVVLLMVATQTEA), serve as a signal peptide directing secretion. Position 33 is a leucine amide (L33). A propeptide spanning residues 37–91 (GLLDGLLGKRGLLFGKRGPLFGKRALTNQDFLDFAYDPSLSAADMDALEMLFEDY) is cleaved from the precursor.

Belongs to the non-disulfide-bridged peptide (NDBP) superfamily. Short antimicrobial peptide (group 4) family. Expressed by the venom gland.

It localises to the secreted. The protein localises to the target cell membrane. Its function is as follows. Antimicrobial peptide. The protein is Peptide Ctry2146 of Chaerilus tryznai (Scorpion).